The chain runs to 31 residues: Cliotide T17 (31 aa).

Residues 1–31 (GTVPCGESCVFIPCITGIAGCSCKNKVCYLN) constitute a cross-link (cyclopeptide (Gly-Asn)). 3 disulfide bridges follow: Cys5/Cys21, Cys9/Cys23, and Cys14/Cys28.

In terms of processing, contains 3 disulfide bonds. Post-translationally, this is a cyclic peptide. Expressed in root nodules but not in seed.

In terms of biological role, probably participates in a plant defense mechanism. The sequence is that of Cliotide T17 from Clitoria ternatea (Butterfly pea).